A 380-amino-acid polypeptide reads, in one-letter code: Cytochrome b (380 aa).

4 consecutive transmembrane segments (helical) span residues 34-54, 78-99, 114-134, and 179-199; these read FGSL…LLAA, WLLR…YLHI, WNTG…GYVL, and FFAL…IHLT. Heme b is bound by residues His-84 and His-98. The heme b site is built by His-183 and His-197. His-202 is a binding site for a ubiquinone. Transmembrane regions (helical) follow at residues 227-247, 289-309, 321-341, and 348-368; these read LKDI…ALFH, LGGV…PFLH, LSQL…WIGS, and FIII…VLFP.

It belongs to the cytochrome b family. The cytochrome bc1 complex contains 11 subunits: 3 respiratory subunits (MT-CYB, CYC1 and UQCRFS1), 2 core proteins (UQCRC1 and UQCRC2) and 6 low-molecular weight proteins (UQCRH/QCR6, UQCRB/QCR7, UQCRQ/QCR8, UQCR10/QCR9, UQCR11/QCR10 and a cleavage product of UQCRFS1). This cytochrome bc1 complex then forms a dimer. Requires heme b as cofactor.

It is found in the mitochondrion inner membrane. In terms of biological role, component of the ubiquinol-cytochrome c reductase complex (complex III or cytochrome b-c1 complex) that is part of the mitochondrial respiratory chain. The b-c1 complex mediates electron transfer from ubiquinol to cytochrome c. Contributes to the generation of a proton gradient across the mitochondrial membrane that is then used for ATP synthesis. This is Cytochrome b (MT-CYB) from Trogon curucui (Blue-crowned trogon).